A 349-amino-acid polypeptide reads, in one-letter code: Ferredoxin--NADP reductase 1 (349 aa).

Glu36, Lys44, Tyr48, Ile88, Leu123, Asp290, and Ser331 together coordinate FAD.

This sequence belongs to the ferredoxin--NADP reductase type 2 family. As to quaternary structure, homodimer. FAD serves as cofactor.

It catalyses the reaction 2 reduced [2Fe-2S]-[ferredoxin] + NADP(+) + H(+) = 2 oxidized [2Fe-2S]-[ferredoxin] + NADPH. This chain is Ferredoxin--NADP reductase 1, found in Bacillus mycoides (strain KBAB4) (Bacillus weihenstephanensis).